The following is a 407-amino-acid chain: Multifunctional CCA protein (407 aa).

2 residues coordinate ATP: glycine 8 and arginine 11. The CTP site is built by glycine 8 and arginine 11. Aspartate 21 and aspartate 23 together coordinate Mg(2+). ATP-binding residues include arginine 91, arginine 137, and arginine 140. 3 residues coordinate CTP: arginine 91, arginine 137, and arginine 140. The region spanning 226–327 is the HD domain; that stretch reads TGIHVMAVVD…VKLLERTDAL (102 aa).

This sequence belongs to the tRNA nucleotidyltransferase/poly(A) polymerase family. Bacterial CCA-adding enzyme type 1 subfamily. Monomer. Can also form homodimers and oligomers. The cofactor is Mg(2+). Requires Ni(2+) as cofactor.

It catalyses the reaction a tRNA precursor + 2 CTP + ATP = a tRNA with a 3' CCA end + 3 diphosphate. The catalysed reaction is a tRNA with a 3' CCA end + 2 CTP + ATP = a tRNA with a 3' CCACCA end + 3 diphosphate. Functionally, catalyzes the addition and repair of the essential 3'-terminal CCA sequence in tRNAs without using a nucleic acid template. Adds these three nucleotides in the order of C, C, and A to the tRNA nucleotide-73, using CTP and ATP as substrates and producing inorganic pyrophosphate. tRNA 3'-terminal CCA addition is required both for tRNA processing and repair. Also involved in tRNA surveillance by mediating tandem CCA addition to generate a CCACCA at the 3' terminus of unstable tRNAs. While stable tRNAs receive only 3'-terminal CCA, unstable tRNAs are marked with CCACCA and rapidly degraded. The polypeptide is Multifunctional CCA protein (Aromatoleum aromaticum (strain DSM 19018 / LMG 30748 / EbN1) (Azoarcus sp. (strain EbN1))).